The chain runs to 433 residues: Phosphomethylpyrimidine synthase (433 aa).

Residues N66, M94, Y123, H162, 184-186, 225-228, and E264 each bind substrate; these read SRG and DALR. H268 serves as a coordination point for Zn(2+). Substrate is bound at residue Y291. Residue H332 coordinates Zn(2+). Positions 408, 411, and 415 each coordinate [4Fe-4S] cluster.

Belongs to the ThiC family. [4Fe-4S] cluster is required as a cofactor.

It catalyses the reaction 5-amino-1-(5-phospho-beta-D-ribosyl)imidazole + S-adenosyl-L-methionine = 4-amino-2-methyl-5-(phosphooxymethyl)pyrimidine + CO + 5'-deoxyadenosine + formate + L-methionine + 3 H(+). It functions in the pathway cofactor biosynthesis; thiamine diphosphate biosynthesis. Functionally, catalyzes the synthesis of the hydroxymethylpyrimidine phosphate (HMP-P) moiety of thiamine from aminoimidazole ribotide (AIR) in a radical S-adenosyl-L-methionine (SAM)-dependent reaction. In Saccharolobus islandicus (strain M.14.25 / Kamchatka #1) (Sulfolobus islandicus), this protein is Phosphomethylpyrimidine synthase.